A 174-amino-acid polypeptide reads, in one-letter code: uncharacterized protein (174 aa).

Residues 42-174 (SNTKNINLYE…GVKGMFWYPR (133 aa)) form the N-acetyltransferase domain.

It belongs to the acetyltransferase family. Ycf52 subfamily.

The protein localises to the plastid. The protein resides in the chloroplast. This is an uncharacterized protein from Porphyra purpurea (Red seaweed).